The primary structure comprises 318 residues: MIDLSPLVRRLAGTPLASWSQGLQAQLEAKLEKGHGDLDRWRGALQALPTLQPSEIDLVNGLRLDCDCDDATRAQMRQALMGLSPWRKGPFDLFGVHVDTEWHSDWKWSRVSPHLNLKGKRVLDVGCGNGYYQWRMLGAGADMVIGVDPNWLFFCQFQAVQQYLPELPAWHLPFALEDLPANLEGFDTVFSMGVFYHRRSPIEHLLALKDCLVKGGELVLETLVIEGDENQVLVPEDRYAQMRNVWYLPSVPALARWLRRAGFSDVRCVDVSVTSVEEQRSTEWMRYQSLGDFLDPNDHSKTLEGLPAPRRATLLARK.

Residues Lys88, Trp102, Lys107, Gly126, 176–177 (LE), Met192, Tyr196, and Arg311 each bind carboxy-S-adenosyl-L-methionine.

This sequence belongs to the class I-like SAM-binding methyltransferase superfamily. CmoB family. As to quaternary structure, homotetramer.

It catalyses the reaction carboxy-S-adenosyl-L-methionine + 5-hydroxyuridine(34) in tRNA = 5-carboxymethoxyuridine(34) in tRNA + S-adenosyl-L-homocysteine + H(+). Functionally, catalyzes carboxymethyl transfer from carboxy-S-adenosyl-L-methionine (Cx-SAM) to 5-hydroxyuridine (ho5U) to form 5-carboxymethoxyuridine (cmo5U) at position 34 in tRNAs. This chain is tRNA U34 carboxymethyltransferase, found in Pseudomonas putida (strain GB-1).